The sequence spans 860 residues: Ribosome-releasing factor 2, mitochondrial (860 aa).

A tr-type G domain is found at Asp-45 to Leu-337. GTP contacts are provided by residues Ala-54 to Thr-61, Asp-118 to His-122, and Asn-172 to Asp-175.

This sequence belongs to the TRAFAC class translation factor GTPase superfamily. Classic translation factor GTPase family. EF-G/EF-2 subfamily.

The protein localises to the mitochondrion. Mitochondrial GTPase that mediates the disassembly of ribosomes from messenger RNA at the termination of mitochondrial protein biosynthesis. Not involved in the GTP-dependent ribosomal translocation step during translation elongation. This chain is Ribosome-releasing factor 2, mitochondrial, found in Debaryomyces hansenii (strain ATCC 36239 / CBS 767 / BCRC 21394 / JCM 1990 / NBRC 0083 / IGC 2968) (Yeast).